The chain runs to 71 residues: Stathmin-1-B (71 aa).

Positions 1 to 67 (KREHEKEVLQ…EIRKGKECKE (67 aa)) form a coiled coil. The SLD domain maps to 1–71 (KREHEKEVLQ…GKECKEPSED (71 aa)).

This sequence belongs to the stathmin family. In terms of assembly, binds to two alpha/beta-tubulin heterodimers. Post-translationally, from unphosphorylated forms to highly phosphorylated ones in the mature egg, followed by progressive dephosphorylation from the mid-blastula to the tailbud stage. In terms of tissue distribution, ubiquitous. Mostly abundant in brain and oocytes.

The protein resides in the cytoplasm. It is found in the cytoskeleton. Its function is as follows. Involved in the regulation of the microtubule (MT) filament system by destabilizing microtubules. It prevents assembly and promotes disassembly of microtubules. The polypeptide is Stathmin-1-B (stmn1-b) (Xenopus laevis (African clawed frog)).